The sequence spans 215 residues: Probable cutinase 3 (215 aa).

Positions 1–17 (MHFRALLVSALATLAMA) are cleaved as a signal peptide. Cystine bridges form between C39–C118 and C65–C79. S129 serves as the catalytic Nucleophile. A disulfide bridge links C180 with C187. D184 is an active-site residue. The active-site Proton donor/acceptor is the H197.

Belongs to the cutinase family.

The protein resides in the secreted. The catalysed reaction is cutin + H2O = cutin monomers.. In terms of biological role, catalyzes the hydrolysis of complex carboxylic polyesters found in the cell wall of plants. Degrades cutin, a macromolecule that forms the structure of the plant cuticle. This chain is Probable cutinase 3, found in Aspergillus clavatus (strain ATCC 1007 / CBS 513.65 / DSM 816 / NCTC 3887 / NRRL 1 / QM 1276 / 107).